Reading from the N-terminus, the 424-residue chain is Serine--tRNA ligase (424 aa).

The disordered stretch occupies residues 109 to 129 (QEDVPYGESEEDNREERKWGD). 231-233 (TAE) serves as a coordination point for L-serine. ATP is bound at residue 262-264 (RSE). Glu285 contributes to the L-serine binding site. 349-352 (EISS) lines the ATP pocket. Ser385 lines the L-serine pocket.

Belongs to the class-II aminoacyl-tRNA synthetase family. Type-1 seryl-tRNA synthetase subfamily. In terms of assembly, homodimer. The tRNA molecule binds across the dimer.

The protein localises to the cytoplasm. The enzyme catalyses tRNA(Ser) + L-serine + ATP = L-seryl-tRNA(Ser) + AMP + diphosphate + H(+). The catalysed reaction is tRNA(Sec) + L-serine + ATP = L-seryl-tRNA(Sec) + AMP + diphosphate + H(+). It functions in the pathway aminoacyl-tRNA biosynthesis; selenocysteinyl-tRNA(Sec) biosynthesis; L-seryl-tRNA(Sec) from L-serine and tRNA(Sec): step 1/1. In terms of biological role, catalyzes the attachment of serine to tRNA(Ser). Is also able to aminoacylate tRNA(Sec) with serine, to form the misacylated tRNA L-seryl-tRNA(Sec), which will be further converted into selenocysteinyl-tRNA(Sec). This is Serine--tRNA ligase from Shouchella clausii (strain KSM-K16) (Alkalihalobacillus clausii).